The following is a 60-amino-acid chain: UPF0434 protein ESA_02427 (60 aa).

The protein belongs to the UPF0434 family.

The polypeptide is UPF0434 protein ESA_02427 (Cronobacter sakazakii (strain ATCC BAA-894) (Enterobacter sakazakii)).